Reading from the N-terminus, the 98-residue chain is Beta-elicitin cinnamomin (98 aa).

Disulfide bonds link Cys-3–Cys-71, Cys-27–Cys-56, and Cys-51–Cys-95. Residues 33–42 carry the Beak-like motif 1 (ligand binding) motif; that stretch reads YSMLTATALP. The short motif at 72 to 83 is the Beak-like motif 2 (ligand binding) element; it reads DLTVPTSGLVLD.

The protein belongs to the elicitin family.

The protein localises to the secreted. In terms of biological role, induces local and distal defense responses (incompatible hypersensitive reaction) in plants from the solanaceae and cruciferae families. Elicits leaf necrosis and causes the accumulation of pathogenesis-related proteins. Might interact with the lipidic molecules of the plasma membrane. Elicitins are able to load, carry, and transfer sterols between membranes. The protein is Beta-elicitin cinnamomin of Phytophthora cinnamomi (Cinnamon fungus).